We begin with the raw amino-acid sequence, 56 residues long: Large ribosomal subunit protein bL33 (56 aa).

Belongs to the bacterial ribosomal protein bL33 family.

The polypeptide is Large ribosomal subunit protein bL33 (Vibrio vulnificus (strain YJ016)).